The primary structure comprises 81 residues: uncharacterized protein (81 aa).

An N-terminal signal peptide occupies residues 1–24 (MRKILKIVSLLILLLLLVYSFFSP). Residues 25-28 (NSQL) are Extracellular-facing. A helical membrane pass occupies residues 29 to 49 (FVFVQLIIIAFLIGFGINCFV). Topologically, residues 50-81 (KKERYQGTLYFVIAICNITINLDKINELIQSI) are cytoplasmic.

It localises to the cell membrane. This is an uncharacterized protein from Bacillus subtilis (strain 168).